The primary structure comprises 534 residues: Probable protein kinase UbiB (534 aa).

Residues 23-43 (DLLFDLPLPWFLLALRYVLPW) traverse the membrane as a helical segment. In terms of domain architecture, Protein kinase spans 125-492 (RFDVEPLASA…WKKRKDDWFL (368 aa)). ATP-binding positions include 131 to 139 (LASASVAQV) and Lys-153. The Proton acceptor role is filled by Asp-288. 2 helical membrane passes run 490-510 (WFLRLLGSAHLAGGTILAAGG) and 512-532 (LHELGHWPAGIMVAVGLYLVV).

It belongs to the ABC1 family. UbiB subfamily.

The protein localises to the cell inner membrane. It functions in the pathway cofactor biosynthesis; ubiquinone biosynthesis [regulation]. Its function is as follows. Is probably a protein kinase regulator of UbiI activity which is involved in aerobic coenzyme Q (ubiquinone) biosynthesis. The sequence is that of Probable protein kinase UbiB from Pseudomonas fluorescens (strain Pf0-1).